A 141-amino-acid polypeptide reads, in one-letter code: Large ribosomal subunit protein uL16c (141 aa).

The span at 1-17 shows a compositional bias: basic residues; the sequence is MLSPRRTKYRKQHRGRL. The disordered stretch occupies residues 1 to 20; sequence MLSPRRTKYRKQHRGRLKGT.

It belongs to the universal ribosomal protein uL16 family. In terms of assembly, part of the 50S ribosomal subunit.

It localises to the plastid. The protein localises to the chloroplast. The chain is Large ribosomal subunit protein uL16c from Staurastrum punctulatum (Green alga).